Reading from the N-terminus, the 880-residue chain is Alanine--tRNA ligase (880 aa).

Residues His571, His575, Cys673, and His677 each contribute to the Zn(2+) site.

The protein belongs to the class-II aminoacyl-tRNA synthetase family. Zn(2+) is required as a cofactor.

It is found in the cytoplasm. The catalysed reaction is tRNA(Ala) + L-alanine + ATP = L-alanyl-tRNA(Ala) + AMP + diphosphate. Functionally, catalyzes the attachment of alanine to tRNA(Ala) in a two-step reaction: alanine is first activated by ATP to form Ala-AMP and then transferred to the acceptor end of tRNA(Ala). Also edits incorrectly charged Ser-tRNA(Ala) and Gly-tRNA(Ala) via its editing domain. The protein is Alanine--tRNA ligase of Oleidesulfovibrio alaskensis (strain ATCC BAA-1058 / DSM 17464 / G20) (Desulfovibrio alaskensis).